We begin with the raw amino-acid sequence, 153 residues long: ORM1-like protein 2 (153 aa).

Residues 1-21 (MNVGVAHSEVNPNTRVMNSRG) lie on the Cytoplasmic side of the membrane. 2 helical membrane passes run 22 to 42 (IWLA…SIPF) and 43 to 63 (FSIP…MYVF). Residues 64-105 (LHTVKGTPFETPDQGKARLLTHWEQMDYGLQFTSSRKFLSIS) are Cytoplasmic-facing. The helical transmembrane segment at 106–126 (PIVLYLLASFYTKYDAAHFLI) threads the bilayer. The Extracellular segment spans residues 127-153 (NTASLLSVLLPKLPQFHGVRLFGINKY).

The protein belongs to the ORM family. Ceramide-sensitive subunit of the serine palmitoyltransferase (SPT) complex, which is also composed of SPTLC1, SPTLC2/3 and SPTSSA/B.

It localises to the endoplasmic reticulum membrane. Functionally, plays an essential role in the homeostatic regulation of sphingolipid de novo biosynthesis by modulating the activity of the serine palmitoyltransferase (SPT) in response to ceramide levels. When complexed to SPT, the binding of ceramides to its N-terminus stabilizes a conformation that block SPT substrate entry, hence preventing SPT catalytic activity. Through this mechanism, maintains ceramide levels at sufficient concentrations for the production of complex sphingolipids, but which prevents the accumulation of ceramides to levels that trigger apoptosis. In Bos taurus (Bovine), this protein is ORM1-like protein 2 (ORMDL2).